The chain runs to 96 residues: Co-chaperonin GroES (96 aa).

It belongs to the GroES chaperonin family. Heptamer of 7 subunits arranged in a ring. Interacts with the chaperonin GroEL.

It localises to the cytoplasm. In terms of biological role, together with the chaperonin GroEL, plays an essential role in assisting protein folding. The GroEL-GroES system forms a nano-cage that allows encapsulation of the non-native substrate proteins and provides a physical environment optimized to promote and accelerate protein folding. GroES binds to the apical surface of the GroEL ring, thereby capping the opening of the GroEL channel. The protein is Co-chaperonin GroES of Photobacterium profundum (strain SS9).